We begin with the raw amino-acid sequence, 160 residues long: Cytochrome b6-f complex subunit 4 (160 aa).

3 helical membrane passes run 36 to 56, 95 to 115, and 131 to 151; these read LLYI…GLAV, LLGV…PFLE, and TIFL…ALPI.

The protein belongs to the cytochrome b family. PetD subfamily. In terms of assembly, the 4 large subunits of the cytochrome b6-f complex are cytochrome b6, subunit IV (17 kDa polypeptide, petD), cytochrome f and the Rieske protein, while the 4 small subunits are petG, petL, petM and petN. The complex functions as a dimer.

The protein localises to the plastid. Its subcellular location is the chloroplast thylakoid membrane. In terms of biological role, component of the cytochrome b6-f complex, which mediates electron transfer between photosystem II (PSII) and photosystem I (PSI), cyclic electron flow around PSI, and state transitions. The sequence is that of Cytochrome b6-f complex subunit 4 from Anthoceros angustus (Hornwort).